A 1039-amino-acid polypeptide reads, in one-letter code: Isoleucine--tRNA ligase (1039 aa).

A 'HIGH' region motif is present at residues 46–56; the sequence is PYCSGAIHLGT. A 'KMSKS' region motif is present at residues 600-604; that stretch reads KMSKS. Lys603 lines the ATP pocket.

Belongs to the class-I aminoacyl-tRNA synthetase family. IleS type 2 subfamily. As to quaternary structure, monomer. Zn(2+) is required as a cofactor.

The protein resides in the cytoplasm. The enzyme catalyses tRNA(Ile) + L-isoleucine + ATP = L-isoleucyl-tRNA(Ile) + AMP + diphosphate. Its function is as follows. Catalyzes the attachment of isoleucine to tRNA(Ile). As IleRS can inadvertently accommodate and process structurally similar amino acids such as valine, to avoid such errors it has two additional distinct tRNA(Ile)-dependent editing activities. One activity is designated as 'pretransfer' editing and involves the hydrolysis of activated Val-AMP. The other activity is designated 'posttransfer' editing and involves deacylation of mischarged Val-tRNA(Ile). The chain is Isoleucine--tRNA ligase from Methanocaldococcus jannaschii (strain ATCC 43067 / DSM 2661 / JAL-1 / JCM 10045 / NBRC 100440) (Methanococcus jannaschii).